A 444-amino-acid polypeptide reads, in one-letter code: Phosphoglucosamine mutase (444 aa).

The Phosphoserine intermediate role is filled by serine 101. The Mg(2+) site is built by serine 101, aspartate 240, aspartate 242, and aspartate 244. Serine 101 is modified (phosphoserine).

This sequence belongs to the phosphohexose mutase family. It depends on Mg(2+) as a cofactor. Activated by phosphorylation.

It catalyses the reaction alpha-D-glucosamine 1-phosphate = D-glucosamine 6-phosphate. In terms of biological role, catalyzes the conversion of glucosamine-6-phosphate to glucosamine-1-phosphate. The polypeptide is Phosphoglucosamine mutase (Sphingopyxis alaskensis (strain DSM 13593 / LMG 18877 / RB2256) (Sphingomonas alaskensis)).